We begin with the raw amino-acid sequence, 204 residues long: Large ribosomal subunit protein bL25 (204 aa).

The protein belongs to the bacterial ribosomal protein bL25 family. CTC subfamily. As to quaternary structure, part of the 50S ribosomal subunit; part of the 5S rRNA/L5/L18/L25 subcomplex. Contacts the 5S rRNA. Binds to the 5S rRNA independently of L5 and L18.

Its function is as follows. This is one of the proteins that binds to the 5S RNA in the ribosome where it forms part of the central protuberance. This chain is Large ribosomal subunit protein bL25, found in Pseudomonas aeruginosa (strain LESB58).